The sequence spans 1142 residues: MANIAALEPFVGKEDPVELFELIEEIAEGSFGTVYKGKHLPTGNIMAVKIIALDEDETFEDLVVEIDILNRCNHNNIVKYYGSWVKGDELFIAMECCGGGSITEIYQELNIPLNESQIAYVCRETLKGLEYLHHTNVIHRDLKGANILLTESGDVKLADFGVSGLLDKSSKRNTFIGTPYWMAPEVIENRSNPVPYDTKADIWSLGITLIELAEAEPPLSEIHPMKVLFQIPYRDPPKLKNQENYSKDFINFIQSCLQKDPNQRKTATELLKHPFVTNTKEKAVLTDLITKYRKFRAAELEEGGDEDEDSSEQEGMDSDDKDSDLKKSVGTSDRKSTLIANGSTSSLSPPASPSQRKSTGQNLQLPQIIEQQSSSSSSSSSSSLSSQSLQPQAVNKSTDRLSANINGSNTKSNTIDKKTTAAASASASSLNLSTGNLQQSLSGSGSITTNSGVGNGTSGKPTTNGKSSDDRSPDIRTNRKAGRPVTIRKTLEKRNDAVKKIVNAKLMKQQLKDIKKQQQKQQEEEEQLLKQQQKEKDDLLKQNAAKATQQQKQSAAKEEKIQKQHKVEKETLSRQQKADREQLLKKNQSDCSKQRTKVTDQQKQQQREFKDQQKQQQKQKEHEFKDQNKVLDKSTPKKLSKHIAIHQKVIREQEICVQDLVFQQKQDFQKLVDDHQNATQNLFLENKQQSEQLFAWHTQQNQQFQFQQQCQLENYQEYHTVLRENMNAEHQLAKSQLEHSHLSETNHLKERQVTETEQHIKQMTTEQRNSLKEFKLKQTQDFKEFLNKLKKELKDEKGNKKQLQQQHKEQKKQFELTLSTQEVDFQKKQARQKEEEDDILLTHQKESFKRLQDKQQNIIRDIEEHCKLQRQQFETEYTFNEEEMLIEHYRQKKALLKQQHSEQKQIYQEQTQLQYRLLQEQHKESPALLTDQHLKQKESIEEQQKERLTLQQEEHRIQQESLKKQEQKKKGSVTDLPASLASMQLEQSKQLQLLSEQLQAELATMFERHTKETQSLQAELAKAQEKLQSDQQKLLHDLTEEQKKSKLKLKSESPSCKENPLHMKKKSTGTTPPSTSSNQKTLNNSNGASSNGHHHHHHQSAGVGGSGGTISSSHNTPVLPHNMKHQRSFSTSLPSFKFDNQD.

The Protein kinase domain maps to 20–276; it reads FELIEEIAEG…ATELLKHPFV (257 aa). ATP-binding positions include 26–34 and Lys49; that span reads IAEGSFGTV. Asp141 acts as the Proton acceptor in catalysis. The segment covering 300–322 has biased composition (acidic residues); that stretch reads LEEGGDEDEDSSEQEGMDSDDKD. Disordered stretches follow at residues 300-492, 515-636, 744-768, 939-974, and 1040-1142; these read LEEG…KTLE, KKQQ…KSTP, ETNH…TEQR, SIEE…GSVT, and EEQK…DNQD. Over residues 323 to 336 the composition is skewed to basic and acidic residues; that stretch reads SDLKKSVGTSDRKS. Polar residues predominate over residues 355–365; that stretch reads QRKSTGQNLQL. The segment covering 371–390 has biased composition (low complexity); it reads QQSSSSSSSSSSSLSSQSLQ. The span at 391-413 shows a compositional bias: polar residues; the sequence is PQAVNKSTDRLSANINGSNTKSN. The segment covering 421–452 has biased composition (low complexity); it reads AAASASASSLNLSTGNLQQSLSGSGSITTNSG. Over residues 467–477 the composition is skewed to basic and acidic residues; sequence SSDDRSPDIRT. Low complexity predominate over residues 541-554; sequence KQNAAKATQQQKQS. 4 stretches are compositionally biased toward basic and acidic residues: residues 555-588, 597-635, 744-760, and 939-969; these read AAKE…KKNQ, KVTD…DKST, ETNH…EQHI, and SIEE…EQKK. A coiled-coil region spans residues 716-1050; it reads QEYHTVLREN…EQKKSKLKLK (335 aa). Residues 1068-1091 show a composition bias toward low complexity; the sequence is TGTTPPSTSSNQKTLNNSNGASSN.

It belongs to the protein kinase superfamily. STE Ser/Thr protein kinase family. STE20 subfamily. Requires Mg(2+) as cofactor.

The catalysed reaction is L-seryl-[protein] + ATP = O-phospho-L-seryl-[protein] + ADP + H(+). It carries out the reaction L-threonyl-[protein] + ATP = O-phospho-L-threonyl-[protein] + ADP + H(+). In Dictyostelium discoideum (Social amoeba), this protein is Serine/threonine-protein kinase dst2.